A 374-amino-acid polypeptide reads, in one-letter code: Peptide chain release factor 2 (374 aa).

Residue Gln-252 is modified to N5-methylglutamine.

Belongs to the prokaryotic/mitochondrial release factor family. In terms of processing, methylated by PrmC. Methylation increases the termination efficiency of RF2.

The protein localises to the cytoplasm. Functionally, peptide chain release factor 2 directs the termination of translation in response to the peptide chain termination codons UGA and UAA. The polypeptide is Peptide chain release factor 2 (Xanthomonas euvesicatoria pv. vesicatoria (strain 85-10) (Xanthomonas campestris pv. vesicatoria)).